A 448-amino-acid polypeptide reads, in one-letter code: C4-dicarboxylate transport protein (448 aa).

Transmembrane regions (helical) follow at residues 22–42 (FQVV…PAFA), 55–75 (LVKM…IAGM), 90–110 (TYFL…AHVV), 137–157 (ELSL…SAFV), 159–179 (GNIL…ALVG), 199–219 (LVHM…AFTI), and 232–252 (WLVG…LGIV). Residues 428–448 (RAPPLQAPVPPPDAVAPVSAR) form a disordered region. Residues 432-441 (LQAPVPPPDA) are compositionally biased toward pro residues.

The protein belongs to the dicarboxylate/amino acid:cation symporter (DAACS) (TC 2.A.23) family.

The protein resides in the cell inner membrane. Its function is as follows. Responsible for the transport of dicarboxylates such as succinate, fumarate, and malate from the periplasm across the membrane. The protein is C4-dicarboxylate transport protein of Xanthomonas campestris pv. campestris (strain 8004).